Consider the following 402-residue polypeptide: UDP-N-acetylmuramoylalanine--D-glutamate ligase (402 aa).

Residue 97–103 (GTNGKTT) participates in ATP binding.

This sequence belongs to the MurCDEF family.

It is found in the cytoplasm. The catalysed reaction is UDP-N-acetyl-alpha-D-muramoyl-L-alanine + D-glutamate + ATP = UDP-N-acetyl-alpha-D-muramoyl-L-alanyl-D-glutamate + ADP + phosphate + H(+). Its pathway is cell wall biogenesis; peptidoglycan biosynthesis. In terms of biological role, cell wall formation. Catalyzes the addition of glutamate to the nucleotide precursor UDP-N-acetylmuramoyl-L-alanine (UMA). This Campylobacter jejuni subsp. jejuni serotype O:6 (strain 81116 / NCTC 11828) protein is UDP-N-acetylmuramoylalanine--D-glutamate ligase.